A 767-amino-acid chain; its full sequence is Granule-bound starch synthase 2, chloroplastic/amyloplastic (767 aa).

The transit peptide at Met-1 to Lys-45 directs the protein to the chloroplast. 2 disordered regions span residues Lys-160–Glu-204 and Tyr-226–Pro-268. The span at Ser-172 to Ser-188 shows a compositional bias: low complexity. The segment covering Leu-230–Asn-245 has biased composition (basic and acidic residues). A compositionally biased stretch (acidic residues) spans Ala-253–Asn-262. An ADP-alpha-D-glucose-binding site is contributed by Lys-290.

This sequence belongs to the glycosyltransferase 1 family. Bacterial/plant glycogen synthase subfamily.

It is found in the plastid. Its subcellular location is the chloroplast. The protein localises to the amyloplast. It catalyses the reaction [(1-&gt;4)-alpha-D-glucosyl](n) + ADP-alpha-D-glucose = [(1-&gt;4)-alpha-D-glucosyl](n+1) + ADP + H(+). It functions in the pathway glycan biosynthesis; starch biosynthesis. In terms of biological role, accounts for only 10 to 15% of the total soluble starch synthase activity in tubers. The chain is Granule-bound starch synthase 2, chloroplastic/amyloplastic (SS2) from Solanum tuberosum (Potato).